A 201-amino-acid chain; its full sequence is Large ribosomal subunit protein uL4 (201 aa).

The disordered stretch occupies residues 51 to 73 (EVTGSGKKPWRQKGTGRARAGSV).

The protein belongs to the universal ribosomal protein uL4 family. In terms of assembly, part of the 50S ribosomal subunit.

One of the primary rRNA binding proteins, this protein initially binds near the 5'-end of the 23S rRNA. It is important during the early stages of 50S assembly. It makes multiple contacts with different domains of the 23S rRNA in the assembled 50S subunit and ribosome. Its function is as follows. Forms part of the polypeptide exit tunnel. This Erwinia tasmaniensis (strain DSM 17950 / CFBP 7177 / CIP 109463 / NCPPB 4357 / Et1/99) protein is Large ribosomal subunit protein uL4.